Here is a 92-residue protein sequence, read N- to C-terminus: Protein canopy homolog 1 (92 aa).

It belongs to the canopy family.

The polypeptide is Protein canopy homolog 1 (CNPY1) (Homo sapiens (Human)).